The sequence spans 473 residues: KLAGMTGTAKTEEEEFRNIYGMDVMVIPTNKPIARIDKPDLIYKTMEAKFRAVVNEIEEIHKKGQPVLVGTVSVETSELVSKLLNKRRVPHHVLNAKNHEREAEIIEGAGQQGAVTIATNMAGRGTDIKLGEGVRELGGLHVLGTERHESRRIDNQLRGRAGRQGDPGSSQFYLSMEDELMRRFGSDNMRSMMERLGMEEDQPIESRLVSRAVETAQKRVEGNNFDARKQILQYDDVMREQREIIYKQRMEVLESDNLRKIVETMIKDVIDRTVRLHTPENEVPEDWDLMAIVNYMNANLLQEGELEEKDIKGLDPEEMVEAITEKVIARYNEKEEQFTPEHMREFEKVIMLRTVDRKWMNHIDQMDQLRQGIHLRAYGQNDPLREYRFEGFEMFEAMIASIEEEVSMYIMKAQVQQNLERQKVAEGKAVHQDTSKQEPKKKQPIRKGETIGRNDACICGSGKKYKNCCGAGK.

ATP is bound at residue Asp127. The interval 424-447 is disordered; that stretch reads VAEGKAVHQDTSKQEPKKKQPIRK. Cys457, Cys459, Cys468, and Cys469 together coordinate Zn(2+).

The protein belongs to the SecA family. As to quaternary structure, monomer and homodimer. Part of the essential Sec protein translocation apparatus which comprises SecA, SecYEG and auxiliary proteins SecDF. Other proteins may also be involved. Zn(2+) serves as cofactor.

The protein localises to the cell membrane. It is found in the cytoplasm. The enzyme catalyses ATP + H2O + cellular proteinSide 1 = ADP + phosphate + cellular proteinSide 2.. Functionally, part of the Sec protein translocase complex. Interacts with the SecYEG preprotein conducting channel. Has a central role in coupling the hydrolysis of ATP to the transfer of proteins into and across the cell membrane, serving as an ATP-driven molecular motor driving the stepwise translocation of polypeptide chains across the membrane. The protein is Protein translocase subunit SecA of Cytobacillus firmus (Bacillus firmus).